Here is a 328-residue protein sequence, read N- to C-terminus: Transcription initiation factor IIE subunit beta (328 aa).

The tract at residues 32 to 105 (QKKTNDTVIT…SSPSKKVRPG (74 aa)) is disordered. The residue at position 52 (S52) is a Phosphoserine. Acidic residues predominate over residues 85–94 (LDDDDDDEDF). Phosphoserine is present on residues S97 and S106. The TFIIE beta DNA-binding region spans 113-187 (QANQTDISKS…FKYLSTYDVH (75 aa)).

The protein belongs to the TFIIE beta subunit family. In terms of assembly, TFIIE is a tetramer of two alpha (TFA1) and two beta (TFA2) subunits.

Its subcellular location is the nucleus. In terms of biological role, recruits TFIIH to the initiation complex and stimulates the RNA polymerase II C-terminal domain kinase and DNA-dependent ATPase activities of TFIIH. Both TFIIH and TFIIE are required for promoter clearance by RNA polymerase. The chain is Transcription initiation factor IIE subunit beta (TFA2) from Saccharomyces cerevisiae (strain ATCC 204508 / S288c) (Baker's yeast).